Reading from the N-terminus, the 176-residue chain is Cathelicidin-2 (176 aa).

An N-terminal signal peptide occupies residues 1–29; the sequence is METQRASLSLGRCSLWLLLLGLVLPSASA. Glutamine 30 is modified (pyrrolidone carboxylic acid). The propeptide occupies 30–130; the sequence is QALSYREAVL…DINCNELQSV (101 aa). 2 cysteine pairs are disulfide-bonded: cysteine 85/cysteine 96 and cysteine 107/cysteine 124. Residues 157–176 form a disordered region; it reads IFPPIRPPFRPPLGPFPGRR. Residue proline 173 is modified to Proline amide. Positions 174 to 176 are cleaved as a propeptide — removed in mature form; it reads GRR.

It belongs to the cathelicidin family. Post-translationally, elastase is responsible for its maturation. As to expression, large granules of neutrophils.

It localises to the secreted. In terms of biological role, exerts, in vitro, a potent antimicrobial activity. Probably due to an impairment of the function of the respiratory chain and of energy-dependent activities in the inner membrane of susceptible microorganisms. The chain is Cathelicidin-2 (CATHL2) from Bos taurus (Bovine).